We begin with the raw amino-acid sequence, 862 residues long: C-type lectin domain-containing protein 161 (862 aa).

Positions 1-20 are cleaved as a signal peptide; sequence MYRRTTLWFLLLFQPILVFA. Asn-22 and Asn-91 each carry an N-linked (GlcNAc...) asparagine glycan. Residues 41–154 enclose the C-type lectin 1 domain; the sequence is SLNACFKLYN…VGQKLPFVCT (114 aa). Cys-62 and Cys-153 are oxidised to a cystine. The interval 162 to 291 is disordered; that stretch reads AGPAPVHAMR…SDESSDEAYD (130 aa). The segment covering 198 to 218 has biased composition (basic and acidic residues); it reads SDKKEKKEVASDKKKESKKDE. An N-linked (GlcNAc...) asparagine glycan is attached at Asn-222. A compositionally biased stretch (basic and acidic residues) spans 242–252; the sequence is SDKKESSKKDE. N-linked (GlcNAc...) asparagine glycosylation is found at Asn-258, Asn-279, and Asn-352. Residues 265–283 show a composition bias toward low complexity; that stretch reads ANAEMSASISASSANSSSD. Disordered regions lie at residues 377–437, 450–469, and 474–504; these read MTMR…SASL, ALAS…QKSA, and AVVS…IDES. The segment covering 388–418 has biased composition (low complexity); sequence SSSNTDSESASISESSQASEQAVMAAAMSAK. 2 stretches are compositionally biased toward basic and acidic residues: residues 455–467 and 478–491; these read SKSD…KDQK and ENKH…DPKS. A glycan (N-linked (GlcNAc...) asparagine) is linked at Asn-559. C-type lectin domains are found at residues 562–687 and 716–828; these read APAL…SVLC and KNGK…FVSV. Cys-653 and Cys-678 are oxidised to a cystine. N-linked (GlcNAc...) asparagine glycosylation occurs at Asn-765. Cysteines 807 and 819 form a disulfide. N-linked (GlcNAc...) asparagine glycans are attached at residues Asn-831 and Asn-857.

It localises to the secreted. This Caenorhabditis elegans protein is C-type lectin domain-containing protein 161 (clec-161).